The chain runs to 113 residues: MDIIKQIEQKQMRDDIPDFKTGDSVRVYVKVVEGQRERQQPFEGIVIRKKGSGLRETFTVRRTSFGVGVERTFPVHSPKLGKIEVLRRGKTRRAKLYYLRDLKGKAARVKGIR.

Belongs to the bacterial ribosomal protein bL19 family.

In terms of biological role, this protein is located at the 30S-50S ribosomal subunit interface and may play a role in the structure and function of the aminoacyl-tRNA binding site. This is Large ribosomal subunit protein bL19 from Natranaerobius thermophilus (strain ATCC BAA-1301 / DSM 18059 / JW/NM-WN-LF).